The sequence spans 612 residues: Transcription factor ffsR (612 aa).

Residues 1 to 12 show a composition bias toward polar residues; that stretch reads MDTLTAPTTQSE. A disordered region spans residues 1–21; sequence MDTLTAPTTQSEQPPPPLTAS. A DNA-binding region (zn(2)-C6 fungal-type) is located at residues 28-60; the sequence is CDRCRSHKLRCNRDLMTSTNSPCQRCRKARVKC. Over residues 73–82 the composition is skewed to basic and acidic residues; the sequence is EELKNGENVH. Disordered regions lie at residues 73–130, 154–249, and 451–470; these read EELK…SMSG, DGST…VTSS, and GQGP…TTTN. Polar residues-rich tracts occupy residues 92-103, 154-169, and 238-249; these read SHRTASTPSNHA, DGST…TNGS, and LTQQHPAGVTSS. The span at 458 to 470 shows a compositional bias: low complexity; it reads PSQGSSSRSTTTN.

It localises to the nucleus. Its function is as follows. Transcription factor that specifically regulates the expression of the gene cluster that mediates the biosynthesis of the cytotoxic leucine-containing cytochalasans, including aspochalasin C, aspochalasin E, TMC-169, flavichalasine F, aspergillin PZ, aspochalasin M and flavichalasine G. This Aspergillus flavipes protein is Transcription factor ffsR.